A 792-amino-acid polypeptide reads, in one-letter code: Probable exo-1,4-beta-xylosidase xlnD (792 aa).

An N-terminal signal peptide occupies residues 1–20; that stretch reads MSVAKSIAAVLVALLPGALA. N-linked (GlcNAc...) asparagine glycans are attached at residues N23, N87, N118, N142, and N246. D310 is an active-site residue. 8 N-linked (GlcNAc...) asparagine glycosylation sites follow: N326, N385, N404, N440, N477, N518, N679, and N701.

Belongs to the glycosyl hydrolase 3 family.

The protein resides in the secreted. The catalysed reaction is Hydrolysis of (1-&gt;4)-beta-D-xylans, to remove successive D-xylose residues from the non-reducing termini.. It participates in glycan degradation; xylan degradation. Xylan 1,4-beta-xylosidase involved in the hydrolysis of xylan, a major structural heterogeneous polysaccharide found in plant biomass representing the second most abundant polysaccharide in the biosphere, after cellulose. In Aspergillus fumigatus (strain CBS 144.89 / FGSC A1163 / CEA10) (Neosartorya fumigata), this protein is Probable exo-1,4-beta-xylosidase xlnD (xlnD).